Reading from the N-terminus, the 172-residue chain is Putative acetyltransferase YvoF (172 aa).

It belongs to the transferase hexapeptide repeat family.

This chain is Putative acetyltransferase YvoF (yvoF), found in Bacillus subtilis (strain 168).